Here is a 475-residue protein sequence, read N- to C-terminus: Aspartyl/glutamyl-tRNA(Asn/Gln) amidotransferase subunit B (475 aa).

Belongs to the GatB/GatE family. GatB subfamily. Heterotrimer of A, B and C subunits.

It carries out the reaction L-glutamyl-tRNA(Gln) + L-glutamine + ATP + H2O = L-glutaminyl-tRNA(Gln) + L-glutamate + ADP + phosphate + H(+). It catalyses the reaction L-aspartyl-tRNA(Asn) + L-glutamine + ATP + H2O = L-asparaginyl-tRNA(Asn) + L-glutamate + ADP + phosphate + 2 H(+). Allows the formation of correctly charged Asn-tRNA(Asn) or Gln-tRNA(Gln) through the transamidation of misacylated Asp-tRNA(Asn) or Glu-tRNA(Gln) in organisms which lack either or both of asparaginyl-tRNA or glutaminyl-tRNA synthetases. The reaction takes place in the presence of glutamine and ATP through an activated phospho-Asp-tRNA(Asn) or phospho-Glu-tRNA(Gln). The sequence is that of Aspartyl/glutamyl-tRNA(Asn/Gln) amidotransferase subunit B from Clostridium novyi (strain NT).